The following is a 344-amino-acid chain: MDITELLAFSAKQGASDLHLSAGLPPMIRVDGDVRRINLPPLEHKQVHALIYDIMNDKQRKDFEEFLETDFSFEVPGVARFRVNAFNQNRGAGAVFRTIPSKVLTMEELGMGEVFKRVSDVPRGLVLVTGPTGSGKSTTLAAMLDYLNNTKYHHILTIEDPIEFVHESKKCLVNQREVHRDTLGFSEALRSALREDPDIILVGEMRDLETIRLALTAAETGHLVFGTLHTTSAAKTIDRVVDVFPAEEKAMVRSMLSESLQSVISQTLIKKIGGGRVAAHEIMIGTPAIRNLIREDKVAQMYSAIQTGGSLGMQTLDMCLKGLVAKGLISRENAREKAKIPENF.

ATP-binding positions include Arg-82 and 133–138 (GSGKST).

Belongs to the GSP E family. As to quaternary structure, homohexamer. Interacts with PilU.

It is found in the cytoplasm. In terms of biological role, ATPase component of the type IV pilus (T4P) that plays a role in surface and host cell adhesion, colonization, biofilm maturation, virulence, and twitching, a form of surface-associated motility facilitated by cycles of extension, adhesion, and retraction of T4P fibers. Acts as a molecular motor to provide the energy that is required for T4P retraction while antagonist PilB ATPase activity is required for T4P extension. Also promotes PilU retractation activity through direct interaction. This chain is Type IV pilus retractation ATPase PilT (pilT), found in Pseudomonas aeruginosa (strain ATCC 15692 / DSM 22644 / CIP 104116 / JCM 14847 / LMG 12228 / 1C / PRS 101 / PAO1).